A 250-amino-acid chain; its full sequence is Functional amyloid subunit FapC (250 aa).

An N-terminal signal peptide occupies residues 1 to 24 (MKPTMALKPLVFALAALMAVAAQA). The stretch at 62–95 (NNAGANGSLSNSKGNLGANIAAGSGNQQDNAAAI) is one FapC_R1 repeat. Residues 96–126 (TSSAGDAATVFAVADIYQESKDNKFTNKGTQ) are linker 1. The stretch at 127–160 (NNALLNNSANNSSGNVGVNVAAGQGNQQKNNLAI) is one FapC_R2 repeat. The tract at residues 161 to 199 (VTADGKNVAAASNTEQVSLDNHFLNEASSKHSYKPQYVV) is linker 2. The stretch at 200–233 (NNAGLLNSANNASGNIGVNVAAGAGNQQSNTLTL) is one FapC_R3 repeat. The Cys-X-X-Cys signature appears at 237-240 (CTVC).

It belongs to the FapB/FapC family. In terms of assembly, the major component of purified amyloid fibrils. Forms fibrils in vitro; in the presence of FapA the fibrils are about 50% wider. Interacts with FapA. Fibrillates in vitro; this is inhibited by FapA. Fibrils are resistant to boiling in 2% (weight/vol) SDS and require &gt;90% (vol/vol) formic acid to dissolve.

It localises to the fimbrium. Its subcellular location is the secreted. Its function is as follows. The major functional amyloid subunit in this bacterium. Intrinsically disordered in its monomeric state. Upon overexpression of the endogenous six-gene locus (fapA-fapF) in situ, cells form large clumps during liquid growth, make large amounts of biofilm and produce amyloid fibrils. Expression of the 6 gene operon in E.coli strain BL21(DE3) induces flocculation and biofilm formation with copious extracellular fibrils. The sequence is that of Functional amyloid subunit FapC from Pseudomonas fluorescens.